The following is a 977-amino-acid chain: Protein bric-a-brac 1 (977 aa).

The disordered stretch occupies residues 1–97; it reads MASAQAETNV…RSSSVASPSS (97 aa). The segment covering 34-43 has biased composition (polar residues); sequence PKSNRSSPTQ. A compositionally biased stretch (basic and acidic residues) spans 44 to 69; that stretch reads QEEKRIKSEDRTSPTGGAKDEDKESQ. The segment covering 80–97 has biased composition (low complexity); it reads SPVSSPQGRSSSVASPSS. The BTB domain maps to 127 to 192; sequence VDVTLACDGR…MYRGEINVSQ (66 aa). Disordered stretches follow at residues 221–249, 281–348, 362–434, and 447–497; these read AAAA…HDRE, ERQQ…GSTV, DMPS…RFPL, and SGLG…ADDL. Residues 316 to 330 show a composition bias toward basic and acidic residues; that stretch reads ERMELEQKERERQRD. The span at 372 to 396 shows a compositional bias: low complexity; it reads PLSRSSRPHSQSPQQQQAQQQGQLP. The span at 469–491 shows a compositional bias: gly residues; it reads GGGVGGGGVGGGGAGGVGSGGGS. An HTH psq-type domain is found at 559–611; the sequence is FRERGPLKSWRPETMAEAIFSVLKEGLSLSQAARKYDIPYPTFVLYANRVHNM. A DNA-binding region (H-T-H motif) is located at residues 569–614; that stretch reads RPETMAEAIFSVLKEGLSLSQAARKYDIPYPTFVLYANRVHNMLGP. Positions 621–632 form a DNA-binding region, a.T hook; it reads DLRPKGRGRPQR. Disordered stretches follow at residues 772-900 and 925-977; these read ASIS…LGDL and VGAS…TTSE. Composition is skewed to low complexity over residues 804–816, 838–853, 862–872, and 925–966; these read MAVA…QQQA, QQQQ…GGHQ, ASSSSSASSSS, and VGAS…SSGG.

Leg imaginal disk at the central region of the tarsus and in eye antenna disk at the basal cylinder.

It localises to the nucleus. In terms of biological role, probably acts as a transcriptional regulator. Required for the specification of the tarsal segment. Also involved in antenna development. This is Protein bric-a-brac 1 (bab1) from Drosophila melanogaster (Fruit fly).